Reading from the N-terminus, the 217-residue chain is ATP-dependent Clp protease proteolytic subunit 3 (217 aa).

Residues 1-13 are compositionally biased toward low complexity; the sequence is MSPFTAGPAPART. Positions 1–23 are disordered; it reads MSPFTAGPAPARTPRAEEGDTPA. Ser108 acts as the Nucleophile in catalysis. The active site involves His133.

It belongs to the peptidase S14 family. Fourteen ClpP subunits assemble into 2 heptameric rings which stack back to back to give a disk-like structure with a central cavity, resembling the structure of eukaryotic proteasomes.

It localises to the cytoplasm. The catalysed reaction is Hydrolysis of proteins to small peptides in the presence of ATP and magnesium. alpha-casein is the usual test substrate. In the absence of ATP, only oligopeptides shorter than five residues are hydrolyzed (such as succinyl-Leu-Tyr-|-NHMec, and Leu-Tyr-Leu-|-Tyr-Trp, in which cleavage of the -Tyr-|-Leu- and -Tyr-|-Trp bonds also occurs).. Functionally, cleaves peptides in various proteins in a process that requires ATP hydrolysis. Has a chymotrypsin-like activity. Plays a major role in the degradation of misfolded proteins. In Streptomyces coelicolor (strain ATCC BAA-471 / A3(2) / M145), this protein is ATP-dependent Clp protease proteolytic subunit 3.